The following is a 162-amino-acid chain: SCF ubiquitin ligase complex protein SKP1a (162 aa).

S2 bears the N-acetylserine mark. Residues 100 to 162 form an interaction with the F-box domain of F-box proteins region; it reads ILAANYLDIK…NEWCEDKGGN (63 aa). A 4-hydroxyproline modification is found at P143. Residue P143 is glycosylated (O-linked (GlcNAc...) hydroxyproline).

It belongs to the SKP1 family. As to quaternary structure, multiprotein complex (SCF) with cullin and F-box-containing protein. Capable of undergoing aggregation. Post-translationally, O-linked glycan consists of linear Gal-Gal-Fuc-Gal-GlcNAc. FpaA and fpaB seem to be identically glycosylated. Glycosylation is required for nuclear enrichment. In terms of processing, hydroxylated by phyA.

The protein localises to the cytoplasm. It localises to the nucleus. The protein is SCF ubiquitin ligase complex protein SKP1a (fpaA) of Dictyostelium discoideum (Social amoeba).